A 179-amino-acid chain; its full sequence is Peptidyl-tRNA hydrolase (179 aa).

Tyr15 lines the tRNA pocket. His20 (proton acceptor) is an active-site residue. Tyr66, Asn68, and Asn114 together coordinate tRNA.

The protein belongs to the PTH family. Monomer.

The protein resides in the cytoplasm. It catalyses the reaction an N-acyl-L-alpha-aminoacyl-tRNA + H2O = an N-acyl-L-amino acid + a tRNA + H(+). Its function is as follows. Hydrolyzes ribosome-free peptidyl-tRNAs (with 1 or more amino acids incorporated), which drop off the ribosome during protein synthesis, or as a result of ribosome stalling. In terms of biological role, catalyzes the release of premature peptidyl moieties from peptidyl-tRNA molecules trapped in stalled 50S ribosomal subunits, and thus maintains levels of free tRNAs and 50S ribosomes. In Chlamydia trachomatis serovar L2b (strain UCH-1/proctitis), this protein is Peptidyl-tRNA hydrolase.